Consider the following 254-residue polypeptide: Alcohol dehydrogenase (254 aa).

Phe-10–Leu-33 lines the NAD(+) pocket. Ser-138 provides a ligand contact to substrate. The active-site Proton acceptor is Tyr-151.

The protein belongs to the short-chain dehydrogenases/reductases (SDR) family. As to quaternary structure, homodimer.

It carries out the reaction a primary alcohol + NAD(+) = an aldehyde + NADH + H(+). The catalysed reaction is a secondary alcohol + NAD(+) = a ketone + NADH + H(+). This is Alcohol dehydrogenase (Adh) from Drosophila hawaiiensis (Fruit fly).